A 138-amino-acid chain; its full sequence is Small ribosomal subunit protein uS9c (138 aa).

It belongs to the universal ribosomal protein uS9 family.

Its subcellular location is the plastid. It localises to the chloroplast. The chain is Small ribosomal subunit protein uS9c (rps9) from Trieres chinensis (Marine centric diatom).